We begin with the raw amino-acid sequence, 360 residues long: Phospho-N-acetylmuramoyl-pentapeptide-transferase (360 aa).

10 helical membrane passes run G27–L47, T74–L94, V99–L119, L135–P155, I165–V185, G199–A219, A236–F256, I263–A283, I288–V308, and Q337–L357.

It belongs to the glycosyltransferase 4 family. MraY subfamily. Mg(2+) serves as cofactor.

The protein resides in the cell inner membrane. The catalysed reaction is UDP-N-acetyl-alpha-D-muramoyl-L-alanyl-gamma-D-glutamyl-meso-2,6-diaminopimeloyl-D-alanyl-D-alanine + di-trans,octa-cis-undecaprenyl phosphate = di-trans,octa-cis-undecaprenyl diphospho-N-acetyl-alpha-D-muramoyl-L-alanyl-D-glutamyl-meso-2,6-diaminopimeloyl-D-alanyl-D-alanine + UMP. Its pathway is cell wall biogenesis; peptidoglycan biosynthesis. Functionally, catalyzes the initial step of the lipid cycle reactions in the biosynthesis of the cell wall peptidoglycan: transfers peptidoglycan precursor phospho-MurNAc-pentapeptide from UDP-MurNAc-pentapeptide onto the lipid carrier undecaprenyl phosphate, yielding undecaprenyl-pyrophosphoryl-MurNAc-pentapeptide, known as lipid I. This Methylocella silvestris (strain DSM 15510 / CIP 108128 / LMG 27833 / NCIMB 13906 / BL2) protein is Phospho-N-acetylmuramoyl-pentapeptide-transferase.